The sequence spans 640 residues: 1-deoxy-D-xylulose-5-phosphate synthase (640 aa).

Residues H79 and 120 to 122 (GHS) contribute to the thiamine diphosphate site. D151 lines the Mg(2+) pocket. Thiamine diphosphate is bound by residues 152–153 (GG), N180, Y288, and E372. N180 lines the Mg(2+) pocket.

It belongs to the transketolase family. DXPS subfamily. In terms of assembly, homodimer. Requires Mg(2+) as cofactor. The cofactor is thiamine diphosphate.

The catalysed reaction is D-glyceraldehyde 3-phosphate + pyruvate + H(+) = 1-deoxy-D-xylulose 5-phosphate + CO2. It participates in metabolic intermediate biosynthesis; 1-deoxy-D-xylulose 5-phosphate biosynthesis; 1-deoxy-D-xylulose 5-phosphate from D-glyceraldehyde 3-phosphate and pyruvate: step 1/1. Functionally, catalyzes the acyloin condensation reaction between C atoms 2 and 3 of pyruvate and glyceraldehyde 3-phosphate to yield 1-deoxy-D-xylulose-5-phosphate (DXP). In Nitrosococcus oceani (strain ATCC 19707 / BCRC 17464 / JCM 30415 / NCIMB 11848 / C-107), this protein is 1-deoxy-D-xylulose-5-phosphate synthase.